Consider the following 65-residue polypeptide: Large ribosomal subunit protein bL35 (65 aa).

The interval Met1–Ile22 is disordered.

This sequence belongs to the bacterial ribosomal protein bL35 family.

This Flavobacterium psychrophilum (strain ATCC 49511 / DSM 21280 / CIP 103535 / JIP02/86) protein is Large ribosomal subunit protein bL35.